A 440-amino-acid chain; its full sequence is 6-phospho-alpha-glucosidase (440 aa).

4-70 contributes to the NAD(+) binding site; it reads FSIVVAGGGS…PDINFVYTTD (67 aa). Substrate is bound by residues Arg93 and Asn147. Cys169 serves as a coordination point for Mn(2+). Asp170 (proton donor) is an active-site residue. His200 serves as a coordination point for Mn(2+). Tyr263 serves as the catalytic Proton acceptor. Arg283 lines the substrate pocket.

This sequence belongs to the glycosyl hydrolase 4 family. In terms of assembly, homodimer. NAD(+) serves as cofactor. Requires Mn(2+) as cofactor.

The protein operates within glycan degradation; palatinose degradation. Functionally, in vitro, readily hydrolyzes p-nitrophenyl-alpha-D-glucopyranoside 6-phosphate (pNPalphaG6P), a chromogenic analog of the phosphorylated isomers of sucrose. In vivo, is probably involved in the degradation of the 6-phosphate derivatives of the sucrose isomers trehalulose, turanose, maltulose and palatinose, catalyzing their hydrolysis into glucose 6-phosphate (G6P) and fructose, which allows the bacterium to use these sugars as energy sources for growth. Is not able to hydrolyze the C2 or C4 chromogenic stereomers (i.e. pNPalpha-mannopyranoside-6P and pNPalpha-galactopyranoside-6P, respectively). The polypeptide is 6-phospho-alpha-glucosidase (pagL) (Leptotrichia buccalis (strain ATCC 14201 / DSM 1135 / JCM 12969 / NCTC 10249 / C-1013-b)).